We begin with the raw amino-acid sequence, 396 residues long: S-adenosylmethionine synthase (396 aa).

His14 lines the ATP pocket. Asp16 serves as a coordination point for Mg(2+). Position 42 (Glu42) interacts with K(+). L-methionine-binding residues include Glu55 and Gln98. The flexible loop stretch occupies residues 98–108 (QSPDIALGVNK). ATP-binding positions include 174–176 (DGK), 241–242 (RF), Asp250, 256–257 (RK), Ala273, and Lys277. Asp250 contributes to the L-methionine binding site. Position 281 (Lys281) interacts with L-methionine.

This sequence belongs to the AdoMet synthase family. Homotetramer; dimer of dimers. Requires Mg(2+) as cofactor. It depends on K(+) as a cofactor.

The protein resides in the cytoplasm. It carries out the reaction L-methionine + ATP + H2O = S-adenosyl-L-methionine + phosphate + diphosphate. It participates in amino-acid biosynthesis; S-adenosyl-L-methionine biosynthesis; S-adenosyl-L-methionine from L-methionine: step 1/1. Its function is as follows. Catalyzes the formation of S-adenosylmethionine (AdoMet) from methionine and ATP. The overall synthetic reaction is composed of two sequential steps, AdoMet formation and the subsequent tripolyphosphate hydrolysis which occurs prior to release of AdoMet from the enzyme. The sequence is that of S-adenosylmethionine synthase from Pseudothermotoga lettingae (strain ATCC BAA-301 / DSM 14385 / NBRC 107922 / TMO) (Thermotoga lettingae).